The following is a 239-amino-acid chain: Fibroblast growth factor 3 (239 aa).

The first 17 residues, 1–17, serve as a signal peptide directing secretion; the sequence is MGLIWLLLLSLLEPGWP. A glycan (N-linked (GlcNAc...) asparagine) is linked at N65. The disordered stretch occupies residues 193–239; it reads QLQSGLPRPPGKGVQPRRRRQKQSPDNLEPSHVQASRLGSQLEASAH. Over residues 225-239 the composition is skewed to polar residues; that stretch reads VQASRLGSQLEASAH.

It belongs to the heparin-binding growth factors family. In terms of assembly, interacts with FGFR1 and FGFR2. Affinity between fibroblast growth factors (FGFs) and their receptors is increased by heparan sulfate glycosaminoglycans that function as coreceptors.

It localises to the secreted. Functionally, plays an important role in the regulation of embryonic development, cell proliferation, and cell differentiation. Required for normal ear development. The chain is Fibroblast growth factor 3 (FGF3) from Homo sapiens (Human).